The sequence spans 307 residues: MPAPEPTRRAKKDASASPSPAHPASRELVILTGLSGAGKGSALKAFEDLGFYAVDNLPIELVPRFAELVAQSVEITRATLVVDVREGQSLAKFPQILQEVRQTLQTTVVFLEASQAVLLRRFSETRRPHPLGREEQVVHAIADEKQRLEPLRNVADMIVDTSRFNVHELRAYIQSKFTREGNAKSMLITCMSFGYKNGVPLDADLVFDVRFLPNPHFIPQFRPLTGKDAKVVRYIRKFEQTRTFLDKVTELLLFLLPHYVHEGKSYLTVAFGCTGGQHRSVMIAEEIAKRLGKKSYRVKAEHRDMPR.

The span at 1 to 14 shows a compositional bias: basic and acidic residues; it reads MPAPEPTRRAKKDA. The interval 1-23 is disordered; sequence MPAPEPTRRAKKDASASPSPAHP. 33-40 provides a ligand contact to ATP; it reads GLSGAGKG. Position 83–86 (83–86) interacts with GTP; it reads DVRE.

This sequence belongs to the RapZ-like family.

Functionally, displays ATPase and GTPase activities. This chain is Nucleotide-binding protein ACP_0619, found in Acidobacterium capsulatum (strain ATCC 51196 / DSM 11244 / BCRC 80197 / JCM 7670 / NBRC 15755 / NCIMB 13165 / 161).